The chain runs to 304 residues: GTP cyclohydrolase FolE2 (304 aa).

The protein belongs to the GTP cyclohydrolase IV family.

The catalysed reaction is GTP + H2O = 7,8-dihydroneopterin 3'-triphosphate + formate + H(+). The protein operates within cofactor biosynthesis; 7,8-dihydroneopterin triphosphate biosynthesis; 7,8-dihydroneopterin triphosphate from GTP: step 1/1. Functionally, converts GTP to 7,8-dihydroneopterin triphosphate. This chain is GTP cyclohydrolase FolE2, found in Hahella chejuensis (strain KCTC 2396).